We begin with the raw amino-acid sequence, 326 residues long: ATP synthase gamma chain (326 aa).

This sequence belongs to the ATPase gamma chain family. In terms of assembly, F-type ATPases have 2 components, CF(1) - the catalytic core - and CF(0) - the membrane proton channel. CF(1) has five subunits: alpha(3), beta(3), gamma(1), delta(1), epsilon(1). CF(0) has three main subunits: a, b and c.

The protein resides in the cell membrane. Functionally, produces ATP from ADP in the presence of a proton gradient across the membrane. The gamma chain is believed to be important in regulating ATPase activity and the flow of protons through the CF(0) complex. This is ATP synthase gamma chain from Corynebacterium efficiens (strain DSM 44549 / YS-314 / AJ 12310 / JCM 11189 / NBRC 100395).